A 116-amino-acid chain; its full sequence is Large ribosomal subunit protein uL18 (116 aa).

It belongs to the universal ribosomal protein uL18 family. Part of the 50S ribosomal subunit; part of the 5S rRNA/L5/L18/L25 subcomplex. Contacts the 5S and 23S rRNAs.

In terms of biological role, this is one of the proteins that bind and probably mediate the attachment of the 5S RNA into the large ribosomal subunit, where it forms part of the central protuberance. The chain is Large ribosomal subunit protein uL18 from Pseudomonas entomophila (strain L48).